A 239-amino-acid polypeptide reads, in one-letter code: Transmembrane emp24 domain-containing protein 6 (239 aa).

Positions methionine 1–serine 21 are cleaved as a signal peptide. Over glutamine 22–tyrosine 200 the chain is Lumenal. The region spanning isoleucine 53–valine 138 is the GOLD domain. N-linked (GlcNAc...) asparagine glycosylation is found at asparagine 156 and asparagine 197. Residues valine 201 to leucine 223 traverse the membrane as a helical segment. Topologically, residues lysine 224–cysteine 239 are cytoplasmic.

Belongs to the EMP24/GP25L family.

The protein resides in the endoplasmic reticulum membrane. This Mus musculus (Mouse) protein is Transmembrane emp24 domain-containing protein 6 (Tmed6).